Reading from the N-terminus, the 249-residue chain is Ribosomal RNA small subunit methyltransferase J (249 aa).

Residues 101–102, 117–118, 153–154, and Asp171 contribute to the S-adenosyl-L-methionine site; these read RD, ER, and SS.

This sequence belongs to the methyltransferase superfamily. RsmJ family.

It localises to the cytoplasm. The enzyme catalyses guanosine(1516) in 16S rRNA + S-adenosyl-L-methionine = N(2)-methylguanosine(1516) in 16S rRNA + S-adenosyl-L-homocysteine + H(+). Specifically methylates the guanosine in position 1516 of 16S rRNA. The polypeptide is Ribosomal RNA small subunit methyltransferase J (Salmonella arizonae (strain ATCC BAA-731 / CDC346-86 / RSK2980)).